The primary structure comprises 233 residues: Phosphonates import ATP-binding protein PhnC 1 (233 aa).

The ABC transporter domain maps to L2–I227. G34–T41 is a binding site for ATP.

This sequence belongs to the ABC transporter superfamily. Phosphonates importer (TC 3.A.1.9.1) family. In terms of assembly, the complex is composed of two ATP-binding proteins (PhnC), two transmembrane proteins (PhnE) and a solute-binding protein (PhnD).

It localises to the cell membrane. The enzyme catalyses phosphonate(out) + ATP + H2O = phosphonate(in) + ADP + phosphate + H(+). Its function is as follows. Part of the ABC transporter complex PhnCDE involved in phosphonates import. Responsible for energy coupling to the transport system. This is Phosphonates import ATP-binding protein PhnC 1 from Natronomonas pharaonis (strain ATCC 35678 / DSM 2160 / CIP 103997 / JCM 8858 / NBRC 14720 / NCIMB 2260 / Gabara) (Halobacterium pharaonis).